Here is a 107-residue protein sequence, read N- to C-terminus: Putative double-stranded DNA mimic protein ECA2319 (107 aa).

It belongs to the putative dsDNA mimic protein family.

Its function is as follows. May act as a double-stranded DNA (dsDNA) mimic. Probably regulates the activity of a dsDNA-binding protein. This Pectobacterium atrosepticum (strain SCRI 1043 / ATCC BAA-672) (Erwinia carotovora subsp. atroseptica) protein is Putative double-stranded DNA mimic protein ECA2319.